A 258-amino-acid polypeptide reads, in one-letter code: Allene oxide cyclase 3, chloroplastic (258 aa).

A chloroplast-targeting transit peptide spans methionine 1–arginine 56.

This sequence belongs to the allene oxide cyclase family. Highly expressed in fully developed leaves.

It localises to the plastid. The protein resides in the chloroplast. The enzyme catalyses (9Z,13S,15Z)-12,13-epoxyoctadeca-9,11,15-trienoate = (9S,13S,15Z)-12-oxophyto-10,15-dienoate. Functionally, involved in the production of 12-oxo-phytodienoic acid (OPDA), a precursor of jasmonic acid. The chain is Allene oxide cyclase 3, chloroplastic (AOC3) from Arabidopsis thaliana (Mouse-ear cress).